Consider the following 382-residue polypeptide: Galactokinase (382 aa).

34–37 provides a ligand contact to substrate; sequence EHTD. An ATP-binding site is contributed by 124–130; sequence GAGLSSS. Mg(2+)-binding residues include Ser-130 and Glu-162. The active-site Proton acceptor is the Asp-174. Tyr-223 provides a ligand contact to substrate.

It belongs to the GHMP kinase family. GalK subfamily.

It localises to the cytoplasm. The catalysed reaction is alpha-D-galactose + ATP = alpha-D-galactose 1-phosphate + ADP + H(+). The protein operates within carbohydrate metabolism; galactose metabolism. In terms of biological role, catalyzes the transfer of the gamma-phosphate of ATP to D-galactose to form alpha-D-galactose-1-phosphate (Gal-1-P). In Shigella boydii serotype 18 (strain CDC 3083-94 / BS512), this protein is Galactokinase.